The primary structure comprises 595 residues: Torsin-1A-interacting protein 1 (595 aa).

The disordered stretch occupies residues 1-221 (MAGERWQAEG…GNTKTNEREA (221 aa)). Residues 1–351 (MAGERWQAEG…NEPSVKIKWW (351 aa)) lie on the Nuclear side of the membrane. The span at 24-38 (PIREGRRRLDPRNGD) shows a compositional bias: basic and acidic residues. Residue S60 is modified to Phosphoserine. 2 stretches are compositionally biased toward basic and acidic residues: residues 70 to 101 (FEPRAAKERSPGGRRTPPEKFRPASAGEEVRE) and 115 to 132 (RAQEAEEMKTRRSARLEQ). The segment covering 133–143 (HSQQPQLSPAT) has biased composition (polar residues). Phosphoserine occurs at positions 134, 140, 151, 153, 154, and 155. Residues 204-215 (LDSTYQTNGNTK) show a composition bias toward polar residues. A Phosphothreonine modification is found at T235. A phosphoserine mark is found at S241, S244, and S255. Disordered regions lie at residues 250 to 286 (ARSSDSLESRDEATPAAGNHPDSLRGLPHNQDFPAHE) and 319 to 340 (IQKSNFGNQSPSTSRPQSAIHH). Positions 251–262 (RSSDSLESRDEA) are enriched in basic and acidic residues. Polar residues predominate over residues 319-335 (IQKSNFGNQSPSTSRPQ). K321 is covalently cross-linked (Glycyl lysine isopeptide (Lys-Gly) (interchain with G-Cter in SUMO2)). A Phosphoserine modification is found at S328. A helical transmembrane segment spans residues 352–372 (LLGLVAILAVGLFWFFHTPAV). Residues 368–595 (HTPAVETTAV…ENTLKAGSCL (228 aa)) are interaction with TOR1A. A coiled-coil region spans residues 373–400 (ETTAVQEFQNQMKQLQSKYQSQNEKLWK). The Perinuclear space portion of the chain corresponds to 373 to 595 (ETTAVQEFQN…ENTLKAGSCL (223 aa)). A glycan (N-linked (GlcNAc...) asparagine) is linked at N411.

The protein belongs to the TOR1AIP family. Interacts with ATP1B4. Interacts with TOR1A (ATP-bound). Interacts with TOR1B, TOR2A and TOR3A. Interacts with VIM. Expressed in the spinal cord and liver (at protein level).

It localises to the nucleus inner membrane. In terms of biological role, required for nuclear membrane integrity. Induces TOR1A and TOR1B ATPase activity and is required for their location on the nuclear membrane. Binds to A- and B-type lamins. Possible role in membrane attachment and assembly of the nuclear lamina. The chain is Torsin-1A-interacting protein 1 (Tor1aip1) from Mus musculus (Mouse).